The following is a 319-amino-acid chain: tRNA uridine(34) hydroxylase (319 aa).

A Rhodanese domain is found at 125-219 (LDENTVVIDA…YGKDPEVQGD (95 aa)). Cys-179 acts as the Cysteine persulfide intermediate in catalysis.

This sequence belongs to the TrhO family.

The catalysed reaction is uridine(34) in tRNA + AH2 + O2 = 5-hydroxyuridine(34) in tRNA + A + H2O. Its function is as follows. Catalyzes oxygen-dependent 5-hydroxyuridine (ho5U) modification at position 34 in tRNAs. The protein is tRNA uridine(34) hydroxylase of Lactococcus lactis subsp. cremoris (strain MG1363).